The chain runs to 303 residues: Putative S-adenosyl-L-methionine-dependent methyltransferase MAB_0213c (303 aa).

S-adenosyl-L-methionine-binding positions include aspartate 126 and 155-156 (DL).

Belongs to the UPF0677 family.

Its function is as follows. Exhibits S-adenosyl-L-methionine-dependent methyltransferase activity. This Mycobacteroides abscessus (strain ATCC 19977 / DSM 44196 / CCUG 20993 / CIP 104536 / JCM 13569 / NCTC 13031 / TMC 1543 / L948) (Mycobacterium abscessus) protein is Putative S-adenosyl-L-methionine-dependent methyltransferase MAB_0213c.